We begin with the raw amino-acid sequence, 373 residues long: Histidinol-phosphate aminotransferase (373 aa).

Position 230 is an N6-(pyridoxal phosphate)lysine (Lys230).

This sequence belongs to the class-II pyridoxal-phosphate-dependent aminotransferase family. Histidinol-phosphate aminotransferase subfamily. As to quaternary structure, homodimer. Pyridoxal 5'-phosphate serves as cofactor.

The enzyme catalyses L-histidinol phosphate + 2-oxoglutarate = 3-(imidazol-4-yl)-2-oxopropyl phosphate + L-glutamate. Its pathway is amino-acid biosynthesis; L-histidine biosynthesis; L-histidine from 5-phospho-alpha-D-ribose 1-diphosphate: step 7/9. The protein is Histidinol-phosphate aminotransferase of Synechococcus sp. (strain ATCC 27144 / PCC 6301 / SAUG 1402/1) (Anacystis nidulans).